Here is a 552-residue protein sequence, read N- to C-terminus: CCR4-NOT transcription complex subunit 6 (552 aa).

LRR repeat units follow at residues 52–73 (HLTA…IAKL), 75–96 (NLVY…LGNM), 98–120 (SLRE…GKLF), and 121–143 (QLQT…CLEP). A nuclease domain region spans residues 153–552 (LLDNLSVSTE…VNGIHLPGRR (400 aa)). Mg(2+) is bound at residue glutamate 235. Residues glutamate 235, glutamate 271, histidine 356, and proline 361 each coordinate substrate. Residue aspartate 407 participates in Mg(2+) binding. Catalysis depends on aspartate 407, which acts as the Proton donor/acceptor. The substrate site is built by asparagine 409, asparagine 476, and phenylalanine 481.

Belongs to the CCR4/nocturin family. As to quaternary structure, subunit of the CCR4-NOT core complex. The cofactor is Mg(2+).

It localises to the cytoplasm. The protein localises to the nucleus. The catalysed reaction is Exonucleolytic cleavage of poly(A) to 5'-AMP.. In terms of biological role, poly(A) nuclease involved in mRNA decay. Has 3'-5' RNase activity. The CCR4-NOT complex functions as a general transcription regulation complex. Enhances ligand-dependent transcriptional activity of nuclear hormone receptors. The chain is CCR4-NOT transcription complex subunit 6 (cnot6) from Xenopus laevis (African clawed frog).